We begin with the raw amino-acid sequence, 346 residues long: Flap endonuclease 1 (346 aa).

Residues 1 to 102 are N-domain; the sequence is MGVTELGKLI…AEIEERRKTR (102 aa). Mg(2+) is bound by residues Asp-31, Asp-84, Glu-156, Glu-158, Asp-177, Asp-179, and Asp-239. An I-domain region spans residues 120–261; it reads DVAKYAKRAV…KALKLIWEFG (142 aa).

It belongs to the XPG/RAD2 endonuclease family. FEN1 subfamily. As to quaternary structure, interacts with PCNA. PCNA stimulates the nuclease activity without altering cleavage specificity. Mg(2+) is required as a cofactor.

In terms of biological role, structure-specific nuclease with 5'-flap endonuclease and 5'-3' exonuclease activities involved in DNA replication and repair. During DNA replication, cleaves the 5'-overhanging flap structure that is generated by displacement synthesis when DNA polymerase encounters the 5'-end of a downstream Okazaki fragment. Binds the unpaired 3'-DNA end and kinks the DNA to facilitate 5' cleavage specificity. Cleaves one nucleotide into the double-stranded DNA from the junction in flap DNA, leaving a nick for ligation. Also involved in the base excision repair (BER) pathway. Acts as a genome stabilization factor that prevents flaps from equilibrating into structures that lead to duplications and deletions. Also possesses 5'-3' exonuclease activity on nicked or gapped double-stranded DNA. This Pyrobaculum aerophilum (strain ATCC 51768 / DSM 7523 / JCM 9630 / CIP 104966 / NBRC 100827 / IM2) protein is Flap endonuclease 1.